A 61-amino-acid polypeptide reads, in one-letter code: Protein transport protein Sec61 subunit beta (61 aa).

The Cytoplasmic portion of the chain corresponds to Met1–Pro35. The chain crosses the membrane as a helical span at residues Thr36–Gly56. The Extracellular portion of the chain corresponds to Lys57 to Ser61.

It belongs to the SEC61-beta family. In terms of assembly, the SEC61 channel-forming translocon complex.

Its subcellular location is the endoplasmic reticulum membrane. In terms of biological role, component of SEC61 channel-forming translocon complex that mediates transport of signal peptide-containing precursor polypeptides across the endoplasmic reticulum (ER). Forms a ribosome receptor and a gated pore in the ER membrane, both functions required for cotranslational translocation of nascent polypeptides. In Dictyostelium discoideum (Social amoeba), this protein is Protein transport protein Sec61 subunit beta (sec61b).